Consider the following 354-residue polypeptide: Interferon-inducible protein AIM2 (354 aa).

A Pyrin domain is found at Met1 to Glu87. Residues Asn95–Asp124 are disordered. Positions Gln109–Arg120 are enriched in polar residues. Residues Met144–Ile341 enclose the HIN-200 domain.

Belongs to the HIN-200 family. Self-associates; forms homooligomers in response to cytosolic double-stranded DNA (dsDNA) and the dsDNA seems to serve as oligomerization platform. Component of AIM2 inflammasome, which consists of a signal sensor component (AIM2), an adapter (PYCARD/ASC), which recruits an effector pro-inflammatory caspase (CASP1). Interacts (via pyrin domain) with PYCARD/ASC (via pyrin domain); interaction is direct. Component of the AIM2 PANoptosome complex, a multiprotein complex that drives inflammatory cell death (PANoptosis). Interacts with EIF2AK2/PKR. Interacts with MAPRE1. Interacts (via HIN-200 domain) with IFI202 (via HIN-200 domain 2); preventing activation of the AIM2 inflammasome. Interacts with RACK1; promoting association with PP2A phosphatase and dephosphorylation of AKT1. Interacts with TRIM11; promoting AIM2 recruitment to autophagosomes and autophagy-dependent degradation. Post-translationally, degraded via selective autophagy following interaction with TRIM11. In terms of tissue distribution, expressed in developing neurons. Highly expressed in regulatory T-cells (Treg).

The protein localises to the cytoplasm. The protein resides in the inflammasome. It is found in the nucleus. Inactive in absence of double-stranded DNA (dsDNA). Homooligomerizes upon binding to dsDNA, dsDNA serving as an oligomerization platform. AIM2 requires large dsDNA to generate a structural template that couples dsDNA ligand-binding and homooligomerization. Homooligomerization is followed by recruitment of PYCARD/ASC to initiate speck formation (nucleation). AIM2 and PYCARD/ASC homooligomer filaments assemble bidirectionally and the recognition between AIM2 and PYCARD/ASC oligomers occurs in a head-to-tail manner. Clustered PYCARD/ASC nucleates the formation of CASP1 filaments through the interaction of their respective CARD domains, acting as a platform for CASP1 polymerization and activation. Active CASP1 then specifically processes protein precursors, such as gasdermin-D (GSDMD), IL1B and IL18, leading to the release of mature cytokines in the extracellular milieu or pyroptosis, depending on cell type. AIM2 can be activated in response to events that cause genomic DNA (HIV protease inhibitor nelfinavir) or mitochondrial DNA release in the cytoplasm (such as Perfluoroalkyl substance pollutants or cholesterol overload). Activation of the AIM2 inflammasome is inhibited by IFI202. Activation of the AIM2 inflammasome is inhibited by TRIM11, which promotes autophagy-dependent degradation of AIM2. In terms of biological role, sensor component of the AIM2 inflammasome, which mediates inflammasome activation in response to the presence of double-stranded DNA (dsDNA) in the cytosol, leading to subsequent pyroptosis. Inflammasomes are supramolecular complexes that assemble in the cytosol in response to pathogens and other damage-associated signals and play critical roles in innate immunity and inflammation. Acts as a recognition receptor (PRR): specifically recognizes and binds dsDNA in the cytosol, and mediates the formation of the inflammasome polymeric complex composed of AIM2, CASP1 and PYCARD/ASC. Recruitment of pro-caspase-1 (proCASP1) to the AIM2 inflammasome promotes caspase-1 (CASP1) activation, which subsequently cleaves and activates inflammatory cytokines IL1B and IL18 and gasdermin-D (GSDMD), promoting cytokine secretion. In some cells, CASP1 activation mediates cleavage and activation of GSDMD, triggering pyroptosis without promoting cytokine secretion. Detects cytosolic dsDNA of viral and bacterial origin in a non-sequence-specific manner. Involved in the DNA damage response caused by acute ionizing radiation by mediating pyroptosis of intestinal epithelial cells and bone marrow cells in response to double-strand DNA breaks. Mechanistically, AIM2 senses DNA damage in the nucleus to mediate inflammasome assembly and inflammatory cell death. Also acts as a regulator of neurodevelopment via its role in the DNA damage response: acts by promoting neural cell death in response to DNA damage in the developing brain, thereby purging genetically compromised cells of the central nervous system. Pyroptosis mediated by the AIM2 inflammasome in response to DNA damage is dependent on GSDMD without involving IL1B and IL18 cytokine secretion. Also acts as a mediator of pyroptosis, necroptosis and apoptosis (PANoptosis), an integral part of host defense against pathogens, in response to bacterial infection. Can also trigger PYCARD/ASC-dependent, caspase-1-independent cell death that involves caspase-8 (CASP8). Also acts as a tumor suppressor independently of its role in inflammatory response. Able to suppress overt cell proliferation in enterocytes: restricts stem cell proliferation in the intestinal mucosa in an inflammasome-independent manner, contributing to a decrease in the likelihood of colorectal cancer development. AIM2 suppresses cell proliferation by inhibiting phosphorylation of AKT1 at 'Ser-473', preventing AKT1 activation and AKT-mTOR signaling pathway. Inhibits AKT1 phosphorylation both by inhibiting the activity of PRKDC/DNA-PK kinase and promoting dephosphorylation by PP2A phosphatase. Also acts as a key regulator of regulatory T-cells (Treg) homeostasis by promoting their stability: acts by preventing AKT1 activation. Its role in Treg homeostasis is important to restain autoimmune diseases. In Mus musculus (Mouse), this protein is Interferon-inducible protein AIM2.